The chain runs to 348 residues: MSIEWIQGACAVPDARVQAAALARQEQLTKPPGALGRLEQLAVQFAAWQRNEQPTVQRIWIAVYAADHGVAAEGVSMFPQAVTGEMVRNFARGGAAIAVLARELGARLEVVNLGVVNDPGELSRVRRAWIAPACANICEQAAMTPAQLRDALAAGAESIAQARTCGTQLFVGGEMGIGNSTAAAALSCALLSQFPQAMAGAGTGLDAEGIAHKATVITRALAVHADAATPLERLRRLGGFEIAALVGAYIAAAQAGIPVLVDGFISTAAALVAVHLNPGVREWLLFGHRSQERGHAALLRALEAEPLLQLDLRLGEASGAAVAIPLLRTACALHNGMATFAEAGVSDA.

Glu316 serves as the catalytic Proton acceptor.

The protein belongs to the CobT family.

It catalyses the reaction 5,6-dimethylbenzimidazole + nicotinate beta-D-ribonucleotide = alpha-ribazole 5'-phosphate + nicotinate + H(+). Its pathway is nucleoside biosynthesis; alpha-ribazole biosynthesis; alpha-ribazole from 5,6-dimethylbenzimidazole: step 1/2. Catalyzes the synthesis of alpha-ribazole-5'-phosphate from nicotinate mononucleotide (NAMN) and 5,6-dimethylbenzimidazole (DMB). This Xanthomonas campestris pv. campestris (strain B100) protein is Nicotinate-nucleotide--dimethylbenzimidazole phosphoribosyltransferase.